A 594-amino-acid polypeptide reads, in one-letter code: MSSLVMHVGIVNKPAITYLPTLSRRASNLHNVSSTRLQTSCSLQLDYKPVDETRRSGNYQPSAWDFEYIQSLKNKYKEEKYLTRHTKLTVQVKMLLDEDMEAVQQLDFIEDLNNLGISYLFKDKITQILNHIYNEHRCFHNNEAEESDLYFTALGFRLLRQHGFKVSQEVFDCFKNEKYTNFKASLAGDTKGLLQLYEASFLLREGEDTLELARKFSTKLLQQKIDEGEPDNNLLSCIRHSLELPLHWRLQRLEARWFLDAYATRHDMNPIIFELAKLEFNITQATQQEELKDLSRWWNSTGLAEKLPFARDRIVESYFWAMGTFEPHQYGYQRELVSKIIALTTVVDDIYDVYGTLEELELFTDVIRRWETESIDELPYYIQLCYLAVNKFVFDLAHDVLKDKGFNSLPYLKRSWKDLIERYLIEAKWYHNRYTPSLEEYLNNARVTITCPTILSQIYFALASPIEKPVIEVMYKYHDILYLSGMLLRLPDDLGTAPFELKRGDVPKAVQCYMKERNVPEKEAREHVRFLIREASKQMNTAMAIDCPFTEDFAVAAANLGRVANLAYVEGDGFGVQHSNIYEHIGSLMFKPYA.

The N-terminal 50 residues, 1-50 (MSSLVMHVGIVNKPAITYLPTLSRRASNLHNVSSTRLQTSCSLQLDYKPV), are a transit peptide targeting the chloroplast. Mg(2+) is bound by residues Asp-348, Asp-352, Asp-492, and Glu-500. The short motif at 348–352 (DDIYD) is the DDXXD motif element.

It belongs to the terpene synthase family. Tpsa subfamily. The cofactor is Mg(2+). Mn(2+) is required as a cofactor. Expressed at low levels in leaves.

It is found in the plastid. It localises to the chloroplast. It catalyses the reaction (2E)-geranyl diphosphate = alpha-pinene + diphosphate. The catalysed reaction is (2E)-geranyl diphosphate + H2O = (1S,2S,4R)-endo-fenchol + diphosphate. The enzyme catalyses (2E)-geranyl diphosphate = limonene + diphosphate. The protein operates within secondary metabolite biosynthesis; terpenoid biosynthesis. Monoterpene synthase involved in the biosynthesis of volatile compounds widely used in aromatherapy and folk medicine, and present in culinary herbs. Mediates the conversion of (2E)-geranyl diphosphate (GPP) into alpha fenchol, limonene and alpha-pinene and, as minor compounds, into beta-myrcene, alpha-terpinolene and alpha-phellandrene. The polypeptide is (-)-endo-fenchol synthase, chloroplastic (Lavandula stoechas (Butterfly lavender)).